A 265-amino-acid chain; its full sequence is Homeobox protein engrailed-2-B (265 aa).

Composition is skewed to basic and acidic residues over residues 1–12 (MEENEQNNREVE) and 102–115 (GEKKSDLAMEETLK). 3 disordered regions span residues 1 to 38 (MEENEQNNREVEPQQESGEESNRGILHQAPPGNHQPHH), 60 to 138 (INHQ…SSKA), and 156 to 182 (DRPSSGPRSRKPKKKSVSKEDKRPRTA). The segment covering 122-136 (DHSLSSDSDSSQASS) has biased composition (low complexity). Positions 176–235 (DKRPRTAFTAEQLQRLKAEFQTNRYLTEQRRQSLAQELGLNESQIKIWFQNKRAKIKKST) form a DNA-binding region, homeobox.

Belongs to the engrailed homeobox family.

The protein localises to the nucleus. This Xenopus laevis (African clawed frog) protein is Homeobox protein engrailed-2-B (en2-b).